We begin with the raw amino-acid sequence, 1249 residues long: MDAKARNCLLQHREALEKDIKTSYIMDHMISNGVLSVIEEEKVKSQATQYQRAAALIKMILNKDNCAYISFYNALLHEGYKDLAALLQSGLPLVSSSSGKDTDGGITSFVRTVLCEGGVPQRPVIFVTRKKLVHAIQQKLWKLNGEPGWVTIYGMAGCGKSVLAAEAVRDHSLLEGCFSGGVHWVSIGKQDKSGLLMKLQNLCMRLDQEESFSQRLPLNIEEAKDRLRVLMLRKHPRSLLILDDVWDPWVLKAFDNQCQILLTTRDKSVTDSVMGPKHVVPVESGLGREKGLEILSLFVNMKKEDLPAEAHSIIKECKGSPLVVSLIGALLRDFPNRWAYYLRQLQNKQFKRIRKSSSYDYEALDEAMSISVEMLREDIKDYYTDLSILQKDVKVPTKVLCVLWDLETEEVEDILQEFVNKSLLFCNRNGKSFCYYLHDLQVDFLTEKNRSQLQDLHRKMVTQFQRYYQPHTLSPDQEDCMYWYNFLAYHMASANMHKELCALMFSLDWIKAKTELVGPAHLIHEFVAYRHILDEKDCAVCENFQEFLSLNGHLLGRQPFPNIVQLGLCEPETSEVYRQAKLQAKQEGDTGRLYLEWINKKTIKNLSRLVVRPHTDAVYHACFSQDGQRIASCGADKTLQVFKAETGEKLLDIKAHEDEVLCCAFSSDDSYIATCSADKKVKIWDSATGKLVHTYDEHSEQVNCCHFTNKSNHLLLATGSNDFFLKLWDLNQKECRNTMFGHTNSVNHCRFSPDDELLASCSADGTLRLWDVRSANERKSINVKRFFLSSEDPPEDVEVIVKCCSWSADGDKIIVAAKNKVLLFDIHTSGLLAEIHTGHHSTIQYCDFSPYDHLAVIALSQYCVELWNIDSRLKVADCRGHLSWVHGVMFSPDGSSFLTASDDQTIRVWETKKVCKNSAIVLKQEIDVVFQENETMVLAVDNIRGLQLIAGKTGQIDYLPEAQVSCCCLSPHLEYVAFGDEDGAIKIIELPNNRVFSSGVGHKKAVRHIQFTADGKTLISSSEDSVIQVWNWQTGDYVFLQAHQETVKDFRLLQDSRLLSWSFDGTVKVWNVITGRIERDFTCHQGTVLSCAISSDATKFSSTSADKTAKIWSFDLLSPLHELKGHNGCVRCSAFSLDGILLATGDDNGEIRIWNVSDGQLLHSCAPISVEEGTATHGGWVTDVCFSPDSKTLVSAGGYLKWWNVATGDSSQTFYTNGTNLKKIHVSPDFRTYVTVDNLGILYILQVLE.

Residues 1–90 (MDAKARNCLL…KDLAALLQSG (90 aa)) form the CARD domain. The NB-ARC domain occupies 106–415 (ITSFVRTVLC…LETEEVEDIL (310 aa)). ATP is bound by residues 154-161 (GMAGCGKS) and arginine 265. Residues 613 to 652 (PHTDAVYHACFSQDGQRIASCGADKTLQVFKAETGEKLLD) form a WD 1-1 repeat. One copy of the WD 1-2 repeat lies at 655–694 (AHEDEVLCCAFSSDDSYIATCSADKKVKIWDSATGKLVHT). Residues 697–738 (EHSEQVNCCHFTNKSNHLLLATGSNDFFLKLWDLNQKECRNT) form a WD 1-3 repeat. A WD 1-4 repeat occupies 741–780 (GHTNSVNHCRFSPDDELLASCSADGTLRLWDVRSANERKS). A WD 1-5 repeat occupies 796–837 (DVEVIVKCCSWSADGDKIIVAAKNKVLLFDIHTSGLLAEIHT). One copy of the WD 1-6 repeat lies at 838–877 (GHHSTIQYCDFSPYDHLAVIALSQYCVELWNIDSRLKVAD). A WD 1-7 repeat occupies 880-910 (GHLSWVHGVMFSPDGSSFLTASDDQTIRVWE). The segment at 910 to 921 (ETKKVCKNSAIV) is interpropeller linker. Residues 922-958 (LKQEIDVVFQENETMVLAVDNIRGLQLIAGKTGQIDY) form a WD 2-1 repeat. Residues 959 to 998 (LPEAQVSCCCLSPHLEYVAFGDEDGAIKIIELPNNRVFSS) form a WD 2-2 repeat. A WD 2-3 repeat occupies 1001 to 1040 (GHKKAVRHIQFTADGKTLISSSEDSVIQVWNWQTGDYVFL). A WD 2-4 repeat occupies 1042–1080 (AHQETVKDFRLLQDSRLLSWSFDGTVKVWNVITGRIERD). Residues 1083 to 1122 (CHQGTVLSCAISSDATKFSSTSADKTAKIWSFDLLSPLHE) form a WD 2-5 repeat. The stretch at 1125 to 1164 (GHNGCVRCSAFSLDGILLATGDDNGEIRIWNVSDGQLLHS) is one WD 2-6 repeat. A WD 2-7 repeat occupies 1176–1213 (THGGWVTDVCFSPDSKTLVSAGGYLKWWNVATGDSSQT). Residues 1214-1249 (FYTNGTNLKKIHVSPDFRTYVTVDNLGILYILQVLE) form a WD 2-8 repeat.

As to quaternary structure, monomer. Oligomerizes to a heptameric ring, known as the apoptosome, upon binding of cytochrome c and dATP. Oligomeric Apaf-1 and pro-caspase-9 bind to each other via their respective NH2-terminal CARD domains and consecutively mature caspase-9 is released from the complex. Interacts with UACA. It may also interact with Bcl-XL. Interacts with APIP. Interacts (via CARD and NACHT domains) with NAIP/BIRC1 (via NACHT domain). Interacts with CIAO2A. Highly expressed in lung and spleen, weakly in brain and kidney and not detectable in liver.

It localises to the cytoplasm. Its function is as follows. Oligomeric Apaf-1 mediates the cytochrome c-dependent autocatalytic activation of pro-caspase-9 (Apaf-3), leading to the activation of caspase-3 and apoptosis. This activation requires ATP. The chain is Apoptotic protease-activating factor 1 (Apaf1) from Mus musculus (Mouse).